The primary structure comprises 119 residues: uncharacterized protein (119 aa).

The next 2 helical transmembrane spans lie at 19-39 and 68-88; these read FYPSFPFYLSFPFCPSFPSFL and FPWFLPLLQLVYLCYKVPWLL.

The protein localises to the membrane. This is an uncharacterized protein from Saccharomyces cerevisiae (strain ATCC 204508 / S288c) (Baker's yeast).